We begin with the raw amino-acid sequence, 245 residues long: Retrovirus-related Pol polyprotein from type-1 retrotransposable element R1 (245 aa).

Residues 1 to 105 form the Reverse transcriptase domain; sequence LKDGTGIVAA…VDLETYCNKA (105 aa). The nucleic acid-binding endonuclease stretch occupies residues 106–245; the sequence is EVRQKFREKE…IVRDDSNLEQ (140 aa).

It catalyses the reaction DNA(n) + a 2'-deoxyribonucleoside 5'-triphosphate = DNA(n+1) + diphosphate. In Popillia japonica (Japanese beetle), this protein is Retrovirus-related Pol polyprotein from type-1 retrotransposable element R1.